Reading from the N-terminus, the 264-residue chain is MSKITSSTLLKFKQEGKKFTALTAYDASFASAFDSEGIDVLLVGDSMGMVLQGHDDTLPVTVEDIAYHTRCVRRGIKRSLLIADMPFMSYATSEQAMTNATALMQAGANMVKLEGGHWLLDTISKLTERGIPVCAHLGLTPQSVHVFGGFKVQGRDSDNAQRILDEAKAIEAAGAQLLVVECIPAPLAKTISEALTIPVIGIGAGADTDGQILVMHDVLGISSGYIPRFSKNYLKQTGEIREAIRAYIDEVAQGIFPGSDHTFN.

Positions 45 and 84 each coordinate Mg(2+). Residues 45–46, Asp84, and Lys112 each bind 3-methyl-2-oxobutanoate; that span reads DS. Glu114 contacts Mg(2+). Glu181 (proton acceptor) is an active-site residue.

This sequence belongs to the PanB family. As to quaternary structure, homodecamer; pentamer of dimers. The cofactor is Mg(2+).

It localises to the cytoplasm. It catalyses the reaction 3-methyl-2-oxobutanoate + (6R)-5,10-methylene-5,6,7,8-tetrahydrofolate + H2O = 2-dehydropantoate + (6S)-5,6,7,8-tetrahydrofolate. It functions in the pathway cofactor biosynthesis; (R)-pantothenate biosynthesis; (R)-pantoate from 3-methyl-2-oxobutanoate: step 1/2. Its function is as follows. Catalyzes the reversible reaction in which hydroxymethyl group from 5,10-methylenetetrahydrofolate is transferred onto alpha-ketoisovalerate to form ketopantoate. The polypeptide is 3-methyl-2-oxobutanoate hydroxymethyltransferase (Shewanella sediminis (strain HAW-EB3)).